Here is a 796-residue protein sequence, read N- to C-terminus: Volume-regulated anion channel subunit LRRC8E (796 aa).

Topologically, residues 1 to 22 (MIPVAEFKQFTEQQPAFKVLKP) are cytoplasmic. Residues 23-43 (WWDVLAEYLTVAMLMIGVFGC) form a helical membrane-spanning segment. Residues 44–116 (TLQVTQDKII…YETALHWYAK (73 aa)) lie on the Extracellular side of the membrane. A disulfide bond links cysteine 54 and cysteine 301. N-linked (GlcNAc...) asparagine glycosylation occurs at asparagine 63. A helical membrane pass occupies residues 117-137 (YFPYLVVIHTLIFMVCTSFWF). The Cytoplasmic segment spans residues 138-265 (KFPGTSSKIE…IRQTVLKVCK (128 aa)). The helical transmembrane segment at 266 to 286 (FLAILVYNLVYVEKISFLVAC) threads the bilayer. Over 287-313 (RVETSEVTGYASFCCNHTKAHLFSKLA) the chain is Extracellular. A glycan (N-linked (GlcNAc...) asparagine) is linked at asparagine 302. A helical membrane pass occupies residues 314–334 (FCYISFVCIYGLTCIYTLYWL). Topologically, residues 335-796 (FHRPLKEYSF…AEVRDKMEEE (462 aa)) are cytoplasmic. LRR repeat units follow at residues 508–529 (GLEE…ATLE), 536–557 (QLKV…TDVA), 559–579 (HLQR…NSLK), 583–604 (ALRE…VFSL), 606–627 (ALQE…LSFQ), 631–652 (KLVT…VRKL), 654–675 (SLEQ…LGLC), 677–698 (GLRL…VGLL), 700–721 (NLQH…LFFC), 723–744 (KLRT…VGAL), and 746–767 (ALSR…LGNC).

This sequence belongs to the LRRC8 family. In terms of assembly, heterohexamer; oligomerizes with other LRRC8 proteins (LRRC8A, LRRC8C, LRRC8D and/or LRRC8B) to form a heterohexamer. In vivo, the subunit composition may depend primarily on expression levels, and heterooligomeric channels containing various proportions of the different LRRC8 proteins may coexist.

It is found in the cell membrane. The protein resides in the endoplasmic reticulum membrane. The protein localises to the lysosome membrane. The catalysed reaction is chloride(in) = chloride(out). The enzyme catalyses iodide(out) = iodide(in). It carries out the reaction taurine(out) = taurine(in). It catalyses the reaction 2',3'-cGAMP(out) = 2',3'-cGAMP(in). Non-essential component of the volume-regulated anion channel (VRAC, also named VSOAC channel), an anion channel required to maintain a constant cell volume in response to extracellular or intracellular osmotic changes. The VRAC channel conducts iodide better than chloride and can also conduct organic osmolytes like taurine. Mediates efflux of amino acids, such as aspartate, in response to osmotic stress. The VRAC channel also mediates transport of immunoreactive cyclic dinucleotide GMP-AMP (2'-3'-cGAMP), an immune messenger produced in response to DNA virus in the cytosol. Channel activity requires LRRC8A plus at least one other family member (LRRC8B, LRRC8C, LRRC8D or LRRC8E); channel characteristics depend on the precise subunit composition. Also plays a role in lysosome homeostasis by forming functional lysosomal VRAC channels in response to low cytoplasmic ionic strength condition: lysosomal VRAC channels are necessary for the formation of large lysosome-derived vacuoles, which store and then expel excess water to maintain cytosolic water homeostasis. In Homo sapiens (Human), this protein is Volume-regulated anion channel subunit LRRC8E.